The following is a 192-amino-acid chain: uncharacterized protein (192 aa).

Positions 29–160 (HRQAAVLIPI…PLDIYRRGDS (132 aa)) constitute a Nudix hydrolase domain. Residues 67–89 (GAVDDTDASVIAAALREAEEEVA) carry the Nudix box motif. Residues Glu-83 and Glu-87 each contribute to the Mg(2+) site.

It belongs to the Nudix hydrolase family. PCD1 subfamily. Mn(2+) is required as a cofactor. Requires Mg(2+) as cofactor.

Probably mediates the hydrolysis of some nucleoside diphosphate derivatives. This is an uncharacterized protein from Shigella flexneri.